Reading from the N-terminus, the 499-residue chain is Putative DUF21 domain-containing protein At1g03270 (499 aa).

The Extracellular segment spans residues 1 to 32 (MVVLSTLALVRAAYSLNSFVFEAEDIRFGSPW). One can recognise a CNNM transmembrane domain in the interval 29 to 211 (GSPWWFVVVG…GKGGELTHEE (183 aa)). Residues 33-53 (WFVVVGVACFLVLFAGIMSGL) traverse the membrane as a helical segment. Residues 54–91 (TLGLMSLGLVELEILQQSGSSAEKKQAAAILPVVKKQH) are Cytoplasmic-facing. Residues 92–112 (QLLVTLLLCNAAAMEALPICL) traverse the membrane as a helical segment. The Extracellular segment spans residues 113-114 (DK). A helical transmembrane segment spans residues 115 to 135 (IFHPFVAVLLSVTFVLAFGEI). Over 136–145 (IPQAICSRYG) the chain is Cytoplasmic. Residues 146-166 (LAVGANFLWLVRILMIICYPI) traverse the membrane as a helical segment. Residues 167-499 (AYPIGKVLDA…TEPLLAESDR (333 aa)) lie on the Extracellular side of the membrane. N181 carries an N-linked (GlcNAc...) asparagine glycan. 3 consecutive CBS domains span residues 230–291 (MTPI…EAPV), 295–359 (SIRK…SNLT), and 365–431 (HESH…IVDE). N-linked (GlcNAc...) asparagine glycans are attached at residues N357, N391, and N484.

It is found in the membrane. This is Putative DUF21 domain-containing protein At1g03270 (CBSDUF4) from Arabidopsis thaliana (Mouse-ear cress).